A 5430-amino-acid chain; its full sequence is Microtubule-actin cross-linking factor 1 (5430 aa).

The tract at residues 1–47 (MSSSDEETLSERSCRSERSCRSERSYRSERSGSLSPCPPGDTLPWNL) is disordered. The tract at residues 1-295 (MSSSDEETLS…VITYVSSIYD (295 aa)) is actin-binding. A Phosphoserine modification is found at S4. Residues 9 to 30 (LSERSCRSERSCRSERSYRSER) show a composition bias toward basic and acidic residues. Residues S35 and S57 each carry the phosphoserine modification. 2 consecutive Calponin-homology (CH) domains span residues 78 to 181 (RVQK…LHFQ) and 194 to 298 (MSAK…DAFP). LRR repeat units follow at residues 148-171 (QRQV…LTLG) and 240-264 (LVDM…VAER). The residue at position 280 (S280) is a Phosphoserine. LRR repeat units follow at residues 377–399 (LYKL…YHPN) and 441–464 (LNCE…LESG). Residues 868-925 (KSTLSVKAICDYRQIEITICKNDECVLEDNSQRTKWKVISPTGNEAMVPSVCLLIPPP) form the SH3 domain. An LRR 5 repeat occupies 1050–1073 (ISELKNIRLRLEECEQRLLKQIQS). The residue at position 1122 (S1122) is a Phosphoserine. 3 LRR repeats span residues 1128-1154 (ATTL…VCLN), 1187-1210 (PADL…VKDK), and 1257-1282 (HRVI…DYRA). Phosphoserine is present on residues S1367 and S1376. 2 LRR repeats span residues 1579 to 1602 (QQEL…IQNH) and 1629 to 1653 (LTAL…TREA). Spectrin repeat units lie at residues 1816 to 1891 (ELQK…NFEE) and 1933 to 2041 (QYQQ…ALLQ). A Phosphoserine modification is found at S1860. The LRR 11 repeat unit spans residues 1869–1891 (KGDLRFVTISGQKVLETENNFEE). 2 LRR repeats span residues 2058–2083 (LQSM…LIQE) and 2194–2220 (IQEL…ALGS). One copy of the Spectrin 3 repeat lies at 2399-2507 (RMEEVQKEAS…TVARQKQLEE (109 aa)). Phosphoserine occurs at positions 2429 and 2454. LRR repeat units follow at residues 2444–2467 (KAFL…LAGL), 2534–2557 (GVLG…QFML), and 2702–2725 (KKRL…RMNR). Spectrin repeat units follow at residues 2733-2837 (TQQF…SRLK) and 2842-2945 (KAQK…SLEE). 2 positions are modified to phosphoserine: S2769 and S2895. 3 LRR repeats span residues 2984-3009 (NKNL…YLRD), 3105-3127 (NKIQ…MLEE), and 3214-3237 (KEQV…LIQS). 13 Spectrin repeats span residues 3169–3274 (EDFY…QLQE), 3281–3383 (KFQD…QLED), 3388–3491 (AKQF…SLLE), 3714–3818 (RSQQ…ARLE), 3825–3927 (NQFW…ALDE), 4047–4152 (LAEK…KLED), 4157–4261 (AVQY…HKLE), 4267–4370 (LGQF…QQLQ), 4375–4481 (QAQG…KLEE), 4486–4589 (ATEF…RSLD), 4594–4700 (RAKQ…KLEE), 4707–4808 (QFMD…RLEQ), and 4812–4916 (QAEE…QRLE). T3368 is modified (phosphothreonine). LRR repeat units lie at residues 3737–3761 (MALG…AFSI) and 3846–3870 (AQLP…QLRE). A Phosphoserine modification is found at S4074. K4252 bears the N6-acetyllysine mark. Residues 4538–4561 (RDQIIELDQTGNQLKFLSQKQDVV) form an LRR 22 repeat. Positions 4993–5023 (PTHAPFIEKSRSGSRKSLNQPTPPPMPILSQ) are disordered. Phosphoserine is present on S5009. EF-hand domains lie at 5083-5118 (HKKS…SKFP) and 5119-5154 (TTKL…NKDA). Residues D5096, D5098, D5100, K5102, E5107, D5132, D5134, D5136, Y5138, and E5143 each coordinate Ca(2+). The 73-residue stretch at 5159–5231 (TDADKIEDEV…EFLVKNDPCR (73 aa)) folds into the GAR domain. Residues 5159 to 5430 (TDADKIEDEV…ASPRTPCPKR (272 aa)) form a C-terminal tail region. The segment at 5247-5430 (PEGASQGMTP…ASPRTPCPKR (184 aa)) is disordered. The span at 5267–5301 (SSRAASPTRSSSSASQSNHSCTSMPSSPATPASGT) shows a compositional bias: low complexity. Position 5296 is a phosphothreonine (T5296). Residues 5317 to 5341 (TFHSSRTSLAGDTSNSSSPASTGAK) show a composition bias toward polar residues. Phosphoserine occurs at positions 5321 and 5334. Low complexity predominate over residues 5352-5366 (SRPGSRAGSRAGSRA). The 4 X 4 AA tandem repeats of [GS]-S-R-[AR] stretch occupies residues 5355-5370 (GSRAGSRAGSRASSRR). Residues S5372 and S5375 each carry the phosphoserine modification. Positions 5381–5391 (ETQSACSDTSE) are enriched in polar residues. Residues 5392-5403 (SSAAGGQGSSRR) show a composition bias toward low complexity.

It belongs to the plakin or cytolinker family. In terms of assembly, interacts with MAPRE1, CLASP1, CLASP2 and GOLGA4. Interacts with AXIN1 and LRP6. Found in a complex composed of MACF1, APC; AXIN1, CTNNB1 and GSK3B. Interacts with CAMSAP3. Phosphorylated on serine residues in the C-terminal tail by GSK3B. Phosphorylation inhibits microtubule-binding and this plays a critical role in bulge stem cell migration and skin wound repair. Wnt-signaling can repress phosphorylation.

The protein resides in the cytoplasm. The protein localises to the cytoskeleton. Its subcellular location is the golgi apparatus. It localises to the cell membrane. It is found in the cell projection. The protein resides in the ruffle membrane. The protein localises to the membrane. In terms of biological role, F-actin-binding protein which plays a role in cross-linking actin to other cytoskeletal proteins and also binds to microtubules. Plays an important role in ERBB2-dependent stabilization of microtubules at the cell cortex. Acts as a positive regulator of Wnt receptor signaling pathway and is involved in the translocation of AXIN1 and its associated complex (composed of APC, CTNNB1 and GSK3B) from the cytoplasm to the cell membrane. Has actin-regulated ATPase activity and is essential for controlling focal adhesions (FAs) assembly and dynamics. Interaction with CAMSAP3 at the minus ends of non-centrosomal microtubules tethers microtubules minus-ends to actin filaments, regulating focal adhesion size and cell migration. May play role in delivery of transport vesicles containing GPI-linked proteins from the trans-Golgi network through its interaction with GOLGA4. Plays a key role in wound healing and epidermal cell migration. Required for efficient upward migration of bulge cells in response to wounding and this function is primarily rooted in its ability to coordinate microtubule dynamics and polarize hair follicle stem cells. As a regulator of actin and microtubule arrangement and stabilization, it plays an essential role in neurite outgrowth, branching and spine formation during brain development. The sequence is that of Microtubule-actin cross-linking factor 1 from Rattus norvegicus (Rat).